Reading from the N-terminus, the 200-residue chain is MAAAGNKSINAKLVLLGDVGAGKSSLVLRFVKDQFVEFQESTIGAAFFSQTLAVNDATVKFEIWDTAGQERYHSLAPMYYRGAAAAIIVFDVTNQASFERAKKWVQELQAQGNPNMVMALAGNKSDLLDARKVTAEDAQTYAQENGLFFMETSAKTATNVKEIFYEIARRLPRVQPTENPTGMVLPDRAMDRAVSSSCCA.

17 to 25 (GDVGAGKSS) contacts GTP. An Effector region motif is present at residues 39-47 (QESTIGAAF). GTP contacts are provided by residues 65-69 (DTAGQ), 123-126 (NKSD), and 153-154 (SA). 2 S-geranylgeranyl cysteine lipidation sites follow: Cys198 and Cys199.

This sequence belongs to the small GTPase superfamily. Rab family. In terms of assembly, interacts with VPS9A homodimer. Interacts with TCTP1. Interacts with MON1. Interacts with EREX (via PX domain). Binds to VPS3. Expressed in roots and actively dividing cells.

It is found in the early endosome membrane. The protein resides in the endosome membrane. It localises to the prevacuolar compartment membrane. The protein localises to the endosome. Its subcellular location is the multivesicular body membrane. It is found in the cell membrane. The protein resides in the cytoplasm. Regulated by guanine nucleotide exchange factors (GEFs) which promote the exchange of bound GDP for free GTP. Functionally, endosomal protein that may be involved in endocytosis. Involved in the trafficking of proteins from prevacuolar compartments (PVCs) to vacuoles. May activate the MON1-CCZ1 complex which acts as guanine nucleotide exchange factors (GEF) for Rab7 protein family, and serves as a link between Rab5 and Rab7 families in PVCs, and mediates PVC maturation. Involved in vacuolar transport of storage proteins with EREX as effector. Regulates membrane trafficking to protein storage vacuoles (PSVs). This is Ras-related protein RABF2b from Arabidopsis thaliana (Mouse-ear cress).